The sequence spans 261 residues: Thiazole synthase (261 aa).

Lys-102 (schiff-base intermediate with DXP) is an active-site residue. 1-deoxy-D-xylulose 5-phosphate contacts are provided by residues Gly-163, 189–190, and 211–212; these read AG and NT.

It belongs to the ThiG family. As to quaternary structure, homotetramer. Forms heterodimers with either ThiH or ThiS.

It is found in the cytoplasm. It carries out the reaction [ThiS sulfur-carrier protein]-C-terminal-Gly-aminoethanethioate + 2-iminoacetate + 1-deoxy-D-xylulose 5-phosphate = [ThiS sulfur-carrier protein]-C-terminal Gly-Gly + 2-[(2R,5Z)-2-carboxy-4-methylthiazol-5(2H)-ylidene]ethyl phosphate + 2 H2O + H(+). Its pathway is cofactor biosynthesis; thiamine diphosphate biosynthesis. Functionally, catalyzes the rearrangement of 1-deoxy-D-xylulose 5-phosphate (DXP) to produce the thiazole phosphate moiety of thiamine. Sulfur is provided by the thiocarboxylate moiety of the carrier protein ThiS. In vitro, sulfur can be provided by H(2)S. This is Thiazole synthase from Acinetobacter baumannii (strain AB307-0294).